Consider the following 382-residue polypeptide: Mannitol-1-phosphate 5-dehydrogenase (382 aa).

4–15 (AVHFGAGNIGRG) provides a ligand contact to NAD(+).

It belongs to the mannitol dehydrogenase family.

The enzyme catalyses D-mannitol 1-phosphate + NAD(+) = beta-D-fructose 6-phosphate + NADH + H(+). This is Mannitol-1-phosphate 5-dehydrogenase from Vibrio parahaemolyticus serotype O3:K6 (strain RIMD 2210633).